Here is a 167-residue protein sequence, read N- to C-terminus: MLILGIDPGTAIVGYGLVEARAGQTRALVYDCIRTPAGEDPCRRLATIYAGIRELIERLQPETMAVEELFFNKNSKTALAVGQARGVILLAAAHTGLPVAEYTPLEVKQAVAGFGRAPKEQVQRMVQALLGLEEKPRPDDVADALAVAVCHASFAPWRQREKEVAGR.

Active-site residues include Asp-7, Glu-67, and Asp-140. Asp-7, Glu-67, and Asp-140 together coordinate Mg(2+).

It belongs to the RuvC family. Homodimer which binds Holliday junction (HJ) DNA. The HJ becomes 2-fold symmetrical on binding to RuvC with unstacked arms; it has a different conformation from HJ DNA in complex with RuvA. In the full resolvosome a probable DNA-RuvA(4)-RuvB(12)-RuvC(2) complex forms which resolves the HJ. It depends on Mg(2+) as a cofactor.

The protein localises to the cytoplasm. The enzyme catalyses Endonucleolytic cleavage at a junction such as a reciprocal single-stranded crossover between two homologous DNA duplexes (Holliday junction).. Functionally, the RuvA-RuvB-RuvC complex processes Holliday junction (HJ) DNA during genetic recombination and DNA repair. Endonuclease that resolves HJ intermediates. Cleaves cruciform DNA by making single-stranded nicks across the HJ at symmetrical positions within the homologous arms, yielding a 5'-phosphate and a 3'-hydroxyl group; requires a central core of homology in the junction. The consensus cleavage sequence is 5'-(A/T)TT(C/G)-3'. Cleavage occurs on the 3'-side of the TT dinucleotide at the point of strand exchange. HJ branch migration catalyzed by RuvA-RuvB allows RuvC to scan DNA until it finds its consensus sequence, where it cleaves and resolves the cruciform DNA. The protein is Crossover junction endodeoxyribonuclease RuvC of Moorella thermoacetica (strain ATCC 39073 / JCM 9320).